We begin with the raw amino-acid sequence, 203 residues long: MSIKLTATTRTDLGKGASRRLRHADLVPAIVYGADKEAVSLTFTHKDIIKAEGIEAFYSSVLDLEIDGVSEQVVLKDLQRHAFKARIQHLDLLRVDAKHKLHTTVPLHFINEGLSEAIKNGGIVYRTINEVEVLCLPKDLPSFIEVDISTMEIGDTLHLSNITLPAGVESVELNKGEEHDLPMVSIALSKKAPAEEIEAETAE.

The protein belongs to the bacterial ribosomal protein bL25 family. CTC subfamily. As to quaternary structure, part of the 50S ribosomal subunit; part of the 5S rRNA/L5/L18/L25 subcomplex. Contacts the 5S rRNA. Binds to the 5S rRNA independently of L5 and L18.

Its function is as follows. This is one of the proteins that binds to the 5S RNA in the ribosome where it forms part of the central protuberance. In Psychromonas ingrahamii (strain DSM 17664 / CCUG 51855 / 37), this protein is Large ribosomal subunit protein bL25.